Reading from the N-terminus, the 235-residue chain is MEGAKRADANLLTDTGTESSPRSPVCSLRHFACEQNLLSRPDGSASFLQGDTSVLAGVYGPAEVKVSKEIFNKATLEVILRPKIGLPGVAEKSRERLVRNTCEAVVLGALHPRTSITVVLQVVSDAGSLLACCLNAACMALVDAGVPMRALFCGVTCALDSDGNLVLDPTTKQEKEARAILTFALDSAEQKLLMSTTKGLYSDAELQQCLAAAQAASQHIFRFYRESLQRRYSKS.

The interval 1–21 (MEGAKRADANLLTDTGTESSP) is disordered. Over residues 12 to 21 (LTDTGTESSP) the composition is skewed to polar residues. Phosphoserine occurs at positions 20 and 23.

Belongs to the RNase PH family. As to quaternary structure, homodimer. Component of the RNA exosome core complex (Exo-9), composed of EXOSC1, EXOSC2, EXOSC3, EXOSC4, EXOSC5, EXOSC6, EXOSC7, EXOSC8 and EXOSC9; within the complex interacts with EXOSC3, EXOSC8, and EXOSC9. The catalytically inactive RNA exosome core complex (Exo-9) associates with the catalytic subunit EXOSC10/RRP6. Exo-9 may associate with DIS3 to form the nucleolar exosome complex, or DIS3L to form the cytoplasmic exosome complex. Exo-9 is formed by a hexameric base ring consisting of the heterodimers EXOSC4-EXOSC9, EXOSC5-EXOSC8 and EXOSC6-EXOSC7, and a cap ring consisting of EXOSC1, EXOSC2 and EXOSC3. The RNA exosome complex associates with cofactors C1D/RRP47, MPHOSPH6/MPP6 and MTREX/MTR4. Interacts with GTPBP1. Interacts with ZC3HAV1. Interacts with DDX17 only in the presence of ZC3HAV1 in an RNA-independent manner.

It localises to the nucleus. It is found in the nucleolus. The protein resides in the cytoplasm. In terms of biological role, non-catalytic component of the RNA exosome complex which has 3'-&gt;5' exoribonuclease activity and participates in a multitude of cellular RNA processing and degradation events. In the nucleus, the RNA exosome complex is involved in proper maturation of stable RNA species such as rRNA, snRNA and snoRNA, in the elimination of RNA processing by-products and non-coding 'pervasive' transcripts, such as antisense RNA species and promoter-upstream transcripts (PROMPTs), and of mRNAs with processing defects, thereby limiting or excluding their export to the cytoplasm. The RNA exosome may be involved in Ig class switch recombination (CSR) and/or Ig variable region somatic hypermutation (SHM) by targeting AICDA deamination activity to transcribed dsDNA substrates. In the cytoplasm, the RNA exosome complex is involved in general mRNA turnover and specifically degrades inherently unstable mRNAs containing AU-rich elements (AREs) within their 3' untranslated regions, and in RNA surveillance pathways, preventing translation of aberrant mRNAs. It seems to be involved in degradation of histone mRNA. The catalytic inactive RNA exosome core complex of 9 subunits (Exo-9) is proposed to play a pivotal role in the binding and presentation of RNA for ribonucleolysis, and to serve as a scaffold for the association with catalytic subunits and accessory proteins or complexes. In vitro, EXOSC5 does not bind or digest single-stranded RNA and binds to double-stranded DNA without detectable DNase activity. The protein is Exosome complex component RRP46 (Exosc5) of Mus musculus (Mouse).